Here is a 466-residue protein sequence, read N- to C-terminus: UDP-N-acetylmuramate--L-alanine ligase (466 aa).

ATP is bound at residue 117–123 (GTHGKTT).

Belongs to the MurCDEF family.

The protein localises to the cytoplasm. The enzyme catalyses UDP-N-acetyl-alpha-D-muramate + L-alanine + ATP = UDP-N-acetyl-alpha-D-muramoyl-L-alanine + ADP + phosphate + H(+). The protein operates within cell wall biogenesis; peptidoglycan biosynthesis. Functionally, cell wall formation. This is UDP-N-acetylmuramate--L-alanine ligase from Streptomyces griseus subsp. griseus (strain JCM 4626 / CBS 651.72 / NBRC 13350 / KCC S-0626 / ISP 5235).